A 185-amino-acid chain; its full sequence is Putative manganese efflux pump MntP (185 aa).

The next 6 helical transmembrane spans lie at 4–24, 40–60, 64–84, 108–128, 134–154, and 165–185; these read LFIG…TDAF, IFHI…AGMA, LLSG…LFIL, LLLF…SLGM, FLAV…GLLA, and YSEA…LLPV.

This sequence belongs to the MntP (TC 9.B.29) family.

Its subcellular location is the cell membrane. Functionally, probably functions as a manganese efflux pump. The sequence is that of Putative manganese efflux pump MntP from Bacillus velezensis (strain DSM 23117 / BGSC 10A6 / LMG 26770 / FZB42) (Bacillus amyloliquefaciens subsp. plantarum).